The primary structure comprises 379 residues: Homoserine O-succinyltransferase (379 aa).

The 310-residue stretch at 51–360 (NAVLICHALS…DAPQGHDAFL (310 aa)) folds into the AB hydrolase-1 domain. The active-site Nucleophile is S157. R227 provides a ligand contact to substrate. Catalysis depends on residues D323 and H356. D357 serves as a coordination point for substrate.

It belongs to the AB hydrolase superfamily. MetX family. Homodimer.

Its subcellular location is the cytoplasm. It carries out the reaction L-homoserine + succinyl-CoA = O-succinyl-L-homoserine + CoA. It functions in the pathway amino-acid biosynthesis; L-methionine biosynthesis via de novo pathway; O-succinyl-L-homoserine from L-homoserine: step 1/1. Its function is as follows. Transfers a succinyl group from succinyl-CoA to L-homoserine, forming succinyl-L-homoserine. This chain is Homoserine O-succinyltransferase, found in Ectopseudomonas mendocina (strain ymp) (Pseudomonas mendocina).